A 243-amino-acid chain; its full sequence is Geranylgeranylglyceryl phosphate synthase (243 aa).

Positions 22 and 51 each coordinate Mg(2+). Sn-glycerol 1-phosphate-binding positions include 170-176 (YLESGSG), 201-202 (GG), and 223-224 (GT).

It belongs to the GGGP/HepGP synthase family. Group II subfamily. Mg(2+) serves as cofactor.

It is found in the cytoplasm. It catalyses the reaction sn-glycerol 1-phosphate + (2E,6E,10E)-geranylgeranyl diphosphate = sn-3-O-(geranylgeranyl)glycerol 1-phosphate + diphosphate. It functions in the pathway membrane lipid metabolism; glycerophospholipid metabolism. In terms of biological role, prenyltransferase that catalyzes the transfer of the geranylgeranyl moiety of geranylgeranyl diphosphate (GGPP) to the C3 hydroxyl of sn-glycerol-1-phosphate (G1P). This reaction is the first ether-bond-formation step in the biosynthesis of archaeal membrane lipids. This chain is Geranylgeranylglyceryl phosphate synthase, found in Picrophilus torridus (strain ATCC 700027 / DSM 9790 / JCM 10055 / NBRC 100828 / KAW 2/3).